A 66-amino-acid polypeptide reads, in one-letter code: Cold shock-like protein CspLB (66 aa).

Positions 4–63 (GTVKWFNSEKGFGFIEVEGGDDVFVHFSAIEGEGFKTLDEGQSVEFEIVEGQRGPQAEKV) constitute a CSD domain.

As to quaternary structure, homodimer.

Its subcellular location is the cytoplasm. The protein is Cold shock-like protein CspLB (cspLB) of Listeria monocytogenes serovar 1/2a (strain ATCC BAA-679 / EGD-e).